A 451-amino-acid polypeptide reads, in one-letter code: Potassium/sodium uptake protein NtpJ (451 aa).

The next 11 membrane-spanning stretches (helical) occupy residues 18–38 (IAAGFFILILFGGSLLTLPFF), 46–66 (HFIDALFTATSAVCVTGLTTL), 78–98 (FLIMTLIEIGGLGFMMIPILF), 133–153 (ILKFAVVIQVIGAVALSVVFI), 162–182 (IWFSIFHAVSSFCNAGFDLLG), 192–212 (VYLIMVVSALIIAGGLGFIVW), 230–250 (VALSVTALLLIGGFILFLITE), 293–313 (LILTMFLMYIGGTSGSTAGGL), 350–370 (ALTLFFVTLSLCVVAIMVLSV), 380–400 (IEYIAFEVFSAFGTVGLTMGL), and 410–430 (LVIISLMYIGRVGIMTVVFSL).

It belongs to the TrkH potassium transport family.

Its subcellular location is the cell membrane. Functionally, mediates electrogenic transport of potassium as well as sodium. Acts probably as a potassium-sodium cotransporter. Major sodium reentry pathway at high pH values. The protein is Potassium/sodium uptake protein NtpJ (ntpJ) of Enterococcus hirae (strain ATCC 9790 / DSM 20160 / JCM 8729 / LMG 6399 / NBRC 3181 / NCIMB 6459 / NCDO 1258 / NCTC 12367 / WDCM 00089 / R).